The chain runs to 157 residues: Small ribosomal subunit protein uS7 (157 aa).

It belongs to the universal ribosomal protein uS7 family. As to quaternary structure, part of the 30S ribosomal subunit. Contacts proteins S9 and S11.

In terms of biological role, one of the primary rRNA binding proteins, it binds directly to 16S rRNA where it nucleates assembly of the head domain of the 30S subunit. Is located at the subunit interface close to the decoding center, probably blocks exit of the E-site tRNA. This is Small ribosomal subunit protein uS7 from Chlamydia trachomatis serovar A (strain ATCC VR-571B / DSM 19440 / HAR-13).